Consider the following 389-residue polypeptide: Flap endonuclease 1 (389 aa).

Residues 1-110 (MGIKGLMKLL…GELAKRSDRR (110 aa)) form an N-domain region. Aspartate 35 contacts Mg(2+). DNA contacts are provided by arginine 48 and arginine 76. Residue aspartate 92 coordinates Mg(2+). The segment at 103–124 (LAKRSDRRQEAQKALEEATEKG) is disordered. The interval 128–259 (DIDRFNKRLV…KKAYAGIKEH (132 aa)) is I-domain. 4 residues coordinate Mg(2+): glutamate 164, glutamate 166, aspartate 185, and aspartate 187. Glutamate 164 is a DNA binding site. Positions 237 and 239 each coordinate DNA. Mg(2+) is bound at residue aspartate 239. Residues 350–358 (SQKRLDSFF) are interaction with PCNA. A disordered region spans residues 362–389 (PSANGAKKRKAPAAKGGKKAATAKKGKK). The span at 367-389 (AKKRKAPAAKGGKKAATAKKGKK) shows a compositional bias: basic residues.

Belongs to the XPG/RAD2 endonuclease family. FEN1 subfamily. As to quaternary structure, interacts with PCNA. Three molecules of FEN1 bind to one PCNA trimer with each molecule binding to one PCNA monomer. PCNA stimulates the nuclease activity without altering cleavage specificity. It depends on Mg(2+) as a cofactor. In terms of processing, phosphorylated. Phosphorylation upon DNA damage induces relocalization to the nuclear plasma.

It is found in the nucleus. Its subcellular location is the nucleolus. It localises to the nucleoplasm. The protein resides in the mitochondrion. Its function is as follows. Structure-specific nuclease with 5'-flap endonuclease and 5'-3' exonuclease activities involved in DNA replication and repair. During DNA replication, cleaves the 5'-overhanging flap structure that is generated by displacement synthesis when DNA polymerase encounters the 5'-end of a downstream Okazaki fragment. It enters the flap from the 5'-end and then tracks to cleave the flap base, leaving a nick for ligation. Also involved in the long patch base excision repair (LP-BER) pathway, by cleaving within the apurinic/apyrimidinic (AP) site-terminated flap. Acts as a genome stabilization factor that prevents flaps from equilibrating into structures that lead to duplications and deletions. Also possesses 5'-3' exonuclease activity on nicked or gapped double-stranded DNA, and exhibits RNase H activity. Also involved in replication and repair of rDNA and in repairing mitochondrial DNA. The sequence is that of Flap endonuclease 1 from Phytophthora infestans (strain T30-4) (Potato late blight agent).